The chain runs to 338 residues: GTPase Obg (338 aa).

The Obg domain maps to 1–159; that stretch reads MSFIDEVKIH…RWLRLELKLM (159 aa). Residues 160–331 enclose the OBG-type G domain; that stretch reads ADVGLLGMPS…LLDEIARQLW (172 aa). GTP contacts are provided by residues 166–173, 191–195, 213–216, 283–286, and 312–314; these read GMPSVGKS, FTTLK, DIPG, NKMD, and SAA. Serine 173 and threonine 193 together coordinate Mg(2+).

This sequence belongs to the TRAFAC class OBG-HflX-like GTPase superfamily. OBG GTPase family. Monomer. Requires Mg(2+) as cofactor.

It is found in the cytoplasm. Functionally, an essential GTPase which binds GTP, GDP and possibly (p)ppGpp with moderate affinity, with high nucleotide exchange rates and a fairly low GTP hydrolysis rate. Plays a role in control of the cell cycle, stress response, ribosome biogenesis and in those bacteria that undergo differentiation, in morphogenesis control. The chain is GTPase Obg from Geotalea daltonii (strain DSM 22248 / JCM 15807 / FRC-32) (Geobacter daltonii).